The chain runs to 1699 residues: Cilia- and flagella-associated protein 61 (1699 aa).

Over residues 1–22 (MYSNNQLDNPNHSRSQYRNGDQ) the composition is skewed to polar residues. Disordered regions lie at residues 1–23 (MYSN…GDQS), 489–515 (QLKR…DEFK), and 1340–1365 (ERDA…EENQ). A compositionally biased stretch (basic residues) spans 489 to 503 (QLKRPQKKVTKRPKR). Composition is skewed to basic and acidic residues over residues 504–515 (QKEEDKKEDEFK) and 1340–1359 (ERDA…QSRD).

It is found in the cell projection. The protein resides in the cilium. As component of a spoke-associated complex, regulates ciliary mobility by mediating a stable and functional assembly of the radial spoke 3 (RS3). The protein is Cilia- and flagella-associated protein 61 of Tetrahymena thermophila (strain SB210).